A 216-amino-acid polypeptide reads, in one-letter code: Probable nicotinate-nucleotide adenylyltransferase (216 aa).

This sequence belongs to the NadD family.

It carries out the reaction nicotinate beta-D-ribonucleotide + ATP + H(+) = deamido-NAD(+) + diphosphate. It participates in cofactor biosynthesis; NAD(+) biosynthesis; deamido-NAD(+) from nicotinate D-ribonucleotide: step 1/1. Functionally, catalyzes the reversible adenylation of nicotinate mononucleotide (NaMN) to nicotinic acid adenine dinucleotide (NaAD). The protein is Probable nicotinate-nucleotide adenylyltransferase of Citrifermentans bemidjiense (strain ATCC BAA-1014 / DSM 16622 / JCM 12645 / Bem) (Geobacter bemidjiensis).